The chain runs to 332 residues: Twinfilin-1 (332 aa).

The ADF-H 1 domain occupies 5–132 (SGIVAEQALL…VDLKNFDSAR (128 aa)). Phosphoserine occurs at positions 167 and 172. An ADF-H 2 domain is found at 173–300 (PLSLTFRVNS…DKSLLMATNK (128 aa)). The disordered stretch occupies residues 301–332 (EDSLDHGSNPDLPNKSNLKFNKPKGPLRKRRT). Residues 321–332 (NKPKGPLRKRRT) are compositionally biased toward basic residues.

This sequence belongs to the actin-binding proteins ADF family. Twinfilin subfamily. In terms of assembly, interacts with G-actin; ADP-actin form.

It is found in the cytoplasm. The protein localises to the cytoskeleton. Functionally, actin-binding protein involved in motile and morphological processes. Inhibits actin polymerization, likely by sequestering G-actin. Prevents actin filament assembly by forming a 1:1 complex with actin monomers, and inhibits the nucleotide exchange reaction of actin monomers. In Saccharomyces cerevisiae (strain ATCC 204508 / S288c) (Baker's yeast), this protein is Twinfilin-1 (TWF1).